The primary structure comprises 152 residues: Large ribosomal subunit protein uL13 (152 aa).

Belongs to the universal ribosomal protein uL13 family. As to quaternary structure, part of the 50S ribosomal subunit.

This protein is one of the early assembly proteins of the 50S ribosomal subunit, although it is not seen to bind rRNA by itself. It is important during the early stages of 50S assembly. The polypeptide is Large ribosomal subunit protein uL13 (Neorickettsia sennetsu (strain ATCC VR-367 / Miyayama) (Ehrlichia sennetsu)).